The primary structure comprises 404 residues: uncharacterized protein (404 aa).

Transmembrane regions (helical) follow at residues 1-21 (MNVLWGLLGAVAIIAIAFLFS), 32-52 (VIVGLCTQVAFGYIVLKWEAG), 89-109 (AFALSVLPVIIFFSALIAVLY), 182-202 (LFGYALLGIPIEYLLAASFMA), 261-281 (LAFVALIAVVNGILGGAFGLF), 285-305 (GVTLESILGYVFSPIAFLIGV), 344-364 (ATIISFALCGFANFSSIAIML), and 384-404 (KAVLAGTLANLLSAAIAGMFI).

The protein belongs to the concentrative nucleoside transporter (CNT) (TC 2.A.41) family.

The protein localises to the cell membrane. This is an uncharacterized protein from Bacillus subtilis (strain 168).